The chain runs to 76 residues: Large ribosomal subunit protein uL24 (76 aa).

Belongs to the universal ribosomal protein uL24 family. Part of the 50S ribosomal subunit.

Functionally, one of two assembly initiator proteins, it binds directly to the 5'-end of the 23S rRNA, where it nucleates assembly of the 50S subunit. One of the proteins that surrounds the polypeptide exit tunnel on the outside of the subunit. This chain is Large ribosomal subunit protein uL24, found in Sulfurimonas denitrificans (strain ATCC 33889 / DSM 1251) (Thiomicrospira denitrificans (strain ATCC 33889 / DSM 1251)).